Consider the following 95-residue polypeptide: uncharacterized protein (95 aa).

A coiled-coil region spans residues 60-89 (VKNMINRIVEELDKRIDEIKEGLNELEKSG).

This is an uncharacterized protein from Sulfolobus islandicus filamentous virus (isolate Iceland/Hveragerdi) (SIFV).